Consider the following 1329-residue polypeptide: Putative protein tag-53 (1329 aa).

Residues 65–92 (SCDKPCYNGVCLNKACVCSKGWYGSQCD) form the EGF-like 1 domain. 5 disulfides stabilise this stretch: Cys-66-Cys-75, Cys-70-Cys-80, Cys-82-Cys-91, Cys-94-Cys-120, and Cys-144-Cys-166. In terms of domain architecture, CUB spans 94 to 203 (CFGRIRISDN…NGFNVSYESN (110 aa)). Asn-103 carries an N-linked (GlcNAc...) asparagine glycan. 2 N-linked (GlcNAc...) asparagine glycosylation sites follow: Asn-197 and Asn-208. 2 EGF-like domains span residues 204–232 (RCAYNCSNHGSCLNGKCDCEDGYKGLNCE) and 235–270 (VCQLSGKSTESPCHEGQCVDGRCECLSARVHGETCQ). 6 cysteine pairs are disulfide-bonded: Cys-205–Cys-215, Cys-209–Cys-220, Cys-222–Cys-231, Cys-236–Cys-252, Cys-247–Cys-257, and Cys-259–Cys-269. 6 Kelch repeats span residues 302 to 353 (VVWS…KYKN), 355 to 408 (LYMF…VAGH), 416 to 463 (EMFV…AVEY), 471 to 518 (AILV…YLNG), 520 to 575 (MVVV…VIGQ), and 577 to 619 (LYAL…KCVF). N-linked (GlcNAc...) asparagine glycosylation is found at Asn-324, Asn-395, Asn-447, Asn-481, Asn-529, and Asn-555. An N-linked (GlcNAc...) asparagine glycan is attached at Asn-820. N-linked (GlcNAc...) asparagine; atypical glycosylation is present at Asn-832. Asn-833 and Asn-934 each carry an N-linked (GlcNAc...) asparagine glycan. 8 cysteine pairs are disulfide-bonded: Cys-945–Cys-953, Cys-947–Cys-968, Cys-971–Cys-980, Cys-983–Cys-997, Cys-1000–Cys-1009, Cys-1002–Cys-1016, Cys-1018–Cys-1028, and Cys-1031–Cys-1045. Laminin EGF-like domains are found at residues 945-999 (CQCN…VCSP) and 1000-1047 (CDCH…PCFY). The EGF-like 4 domain maps to 952–998 (TCFTSVGSFPPVTIEKCQSCQNHTTGAHCERCAPGFYGDARNGGVCS). An N-linked (GlcNAc...) asparagine glycan is attached at Asn-973. Asn-1066, Asn-1102, and Asn-1147 each carry an N-linked (GlcNAc...) asparagine glycan. Residues 1176 to 1196 (VLFFVIFAACFIVLLVVAGLL) form a helical membrane-spanning segment. The Cytoplasmic segment spans residues 1197–1329 (WMIKVRIEAY…TIRQRPNNND (133 aa)).

It localises to the membrane. In Caenorhabditis elegans, this protein is Putative protein tag-53 (tag-53).